We begin with the raw amino-acid sequence, 317 residues long: Large ribosomal subunit protein uL10 (317 aa).

The interval 286–317 (AGAGAAAEKKEEAKKEESESEEDDDMGFGLFD) is disordered. Residues 292–302 (AEKKEEAKKEE) are compositionally biased toward basic and acidic residues.

The protein belongs to the universal ribosomal protein uL10 family. P0 forms a pentameric complex by interaction with dimers of P1 and P2. In terms of processing, phosphorylated.

Its function is as follows. Ribosomal protein P0 is the functional equivalent of E.coli protein L10. The chain is Large ribosomal subunit protein uL10 (RpLP0) from Ceratitis capitata (Mediterranean fruit fly).